The chain runs to 239 residues: Probable transcriptional regulator ycf27 (239 aa).

Residues 7 to 120 form the Response regulatory domain; that stretch reads KILVVDDEIS…ELEARIRSLL (114 aa). Position 56 is a 4-aspartylphosphate (aspartate 56). The H-T-H motif DNA-binding region spans 76 to 94; that stretch reads DIPIIMLTALGDVADRITG. Residues 135–236 constitute a DNA-binding region (ompR/PhoB-type); sequence GENLQIGFLK…ARGIGYLFQN (102 aa).

The protein localises to the plastid. The protein resides in the cyanelle. Probable promoter-specific protein mediating the interaction between DNA and RNA polymerase. The chain is Probable transcriptional regulator ycf27 (ycf27) from Cyanophora paradoxa.